Reading from the N-terminus, the 182-residue chain is Peptidoglycan recognition protein 1 (182 aa).

An N-terminal signal peptide occupies residues 1-18 (MLFACALLALLGLATSCS). Cystine bridges form between Cys17–Cys141, Cys33–Cys78, and Cys54–Cys60. In terms of domain architecture, N-acetylmuramoyl-L-alanine amidase spans 39–167 (HPVRYVVISH…RDVQSTLSPG (129 aa)).

The protein belongs to the N-acetylmuramoyl-L-alanine amidase 2 family. Homodimer; disulfide-linked. Interacts with HSPA1A; this interaction forms a cytotoxic complex that is released by lymphokine-activated killer cells. Interacts with HSPBP1; this interaction blocks the cytotoxic activity of the PGLYRP1-HSPA1A complex. As to expression, strongly expressed in spleen and lung. Also detected in brain and thymus. In the lung, expressed in the intraalveolar space, in the brain, expressed in the Purkinje cells of the cerebellum and in certain layers of neurons in the hippocampus. Also detected in cells filling the space within the intestinal villus.

The protein localises to the cytoplasm. It is found in the secreted. Its function is as follows. Innate immunity protein that plays several important functions in antimicrobial and antitumor defense systems. Acts as a pattern receptor that binds to murein peptidoglycans (PGN) of Gram-positive bacteria and thus provides bactericidal activity. Forms an equimolar complex with heat shock protein HSPA1A and induces programmed cell death through apoptosis and necroptosis in tumor cell lines by activating the TNFR1 receptor on the target cell membrane. In addition, acts in complex with the Ca(2+)-binding protein S100A4 as a chemoattractant able to induce lymphocyte movement. Mechanistically, this complex acts as a ligand of the chemotactic receptors CCR5 and CXCR3 which are present on the cells of the immune system. Also promotes the activation of lymphocytes that become able to kill virus-infected cells as well as tumor cells by modulating the spectrum of their target-cell specificity. Induction of cytotoxicity on monocyte surface requires interaction with TREM1 receptor. This is Peptidoglycan recognition protein 1 (Pglyrp1) from Mus musculus (Mouse).